The sequence spans 325 residues: Tagatose 1,6-diphosphate aldolase 1 (325 aa).

This sequence belongs to the aldolase LacD family.

The catalysed reaction is D-tagatofuranose 1,6-bisphosphate = D-glyceraldehyde 3-phosphate + dihydroxyacetone phosphate. Its pathway is carbohydrate metabolism; D-tagatose 6-phosphate degradation; D-glyceraldehyde 3-phosphate and glycerone phosphate from D-tagatose 6-phosphate: step 2/2. This Streptococcus mutans serotype c (strain ATCC 700610 / UA159) protein is Tagatose 1,6-diphosphate aldolase 1 (lacD1).